A 333-amino-acid chain; its full sequence is MFYDDDADLSIIEGRKVGVIGYGSQGHAHSLSLRDSGVQVRVGLKEGSKSRAKVEEQGIEVDTPAKVAEWADVIMVLAPDTAQAEIFANDIEPNLKPGDALFFGHGLNVHFGLIKPPADVTVAMVAPKGPGHLVRRQFVDGKGVPCLIAVDQDPTGKGEALALSYAKAIGGTRAGVIKTTFKDETETDLFGEQAVLCGGTEELVKTGFDVMVEAGYPPEMAYFEVLHELKLIVDLMYEGGIARMNYSVSDTAEFGGYLSGPRVIDAGTKERMRAILRDIQSGDFVKKLVANVEGGNKQLEALRKENAEHSIEVTGKKLRDLMSWVDRPITETA.

The KARI N-terminal Rossmann domain maps to 1–179 (MFYDDDADLS…GGTRAGVIKT (179 aa)). NADP(+) is bound by residues 22 to 25 (YGSQ), Lys-45, Ser-48, Ser-50, and 80 to 83 (DTAQ). His-105 is an active-site residue. Gly-131 contacts NADP(+). Residues 180–325 (TFKDETETDL…KKLRDLMSWV (146 aa)) enclose the KARI C-terminal knotted domain. Residues Asp-188, Glu-192, Glu-224, and Glu-228 each contribute to the Mg(2+) site. Substrate is bound at residue Ser-249.

This sequence belongs to the ketol-acid reductoisomerase family. Mg(2+) serves as cofactor.

The enzyme catalyses (2R)-2,3-dihydroxy-3-methylbutanoate + NADP(+) = (2S)-2-acetolactate + NADPH + H(+). The catalysed reaction is (2R,3R)-2,3-dihydroxy-3-methylpentanoate + NADP(+) = (S)-2-ethyl-2-hydroxy-3-oxobutanoate + NADPH + H(+). Its pathway is amino-acid biosynthesis; L-isoleucine biosynthesis; L-isoleucine from 2-oxobutanoate: step 2/4. It participates in amino-acid biosynthesis; L-valine biosynthesis; L-valine from pyruvate: step 2/4. Involved in the biosynthesis of branched-chain amino acids (BCAA). Catalyzes an alkyl-migration followed by a ketol-acid reduction of (S)-2-acetolactate (S2AL) to yield (R)-2,3-dihydroxy-isovalerate. In the isomerase reaction, S2AL is rearranged via a Mg-dependent methyl migration to produce 3-hydroxy-3-methyl-2-ketobutyrate (HMKB). In the reductase reaction, this 2-ketoacid undergoes a metal-dependent reduction by NADPH to yield (R)-2,3-dihydroxy-isovalerate. The polypeptide is Ketol-acid reductoisomerase (NADP(+)) (Mycobacterium ulcerans (strain Agy99)).